Consider the following 1249-residue polypeptide: Fanconi anemia group J protein (1249 aa).

The Helicase ATP-binding domain maps to 11–442; sequence GGVKIYFPYK…KDHEPLRAVC (432 aa). Polar residues predominate over residues 102–127; it reads QGTSRHFNYPSTPPSERNGTSSTCQD. The interval 102-131 is disordered; sequence QGTSRHFNYPSTPPSERNGTSSTCQDSPEK. Residues 158 to 175 carry the Nuclear localization signal motif; the sequence is KKRIRPLETTQQIRKRHC. An ATP-binding site is contributed by 185–192; sequence AKVDSGKT. [4Fe-4S] cluster is bound by residues Cys-283, Cys-298, Cys-310, and Cys-350. The DEAH box motif lies at 393–396; it reads DEAH. 7 positions are modified to phosphoserine: Ser-505, Ser-927, Ser-930, Ser-956, Ser-990, Ser-1004, and Ser-1032. The interaction with BRCA1 stretch occupies residues 888–1063; that stretch reads HQKVLNVSIK…ESSNLTVNTS (176 aa). 2 disordered regions span residues 1018 to 1042 and 1108 to 1127; these read KATP…EKME and VSEE…EAED. The segment covering 1023-1032 has biased composition (polar residues); it reads LGSSENSASS. Positions 1110–1122 are enriched in basic and acidic residues; it reads EEDKQSTSNRDFE. At Ser-1237 the chain carries Phosphoserine. Lys-1249 is modified (N6-acetyllysine).

The protein belongs to the DEAD box helicase family. DEAH subfamily. Interacts with the replication protein A complex (RPA) via the RPA1 subunit; following DNA damage they colocalize in foci in the nucleus. Binds directly to the BRCT domains of BRCA1. Interacts with the CIA complex components CIAO1, CIAO2B and MMS19. It depends on [4Fe-4S] cluster as a cofactor. Post-translationally, phosphorylated. Phosphorylation is necessary for interaction with BRCA1, and is cell-cycle regulated. In terms of processing, acetylation at Lys-1249 facilitates DNA end processing required for repair and checkpoint signaling. As to expression, ubiquitously expressed, with highest levels in testis.

The protein resides in the nucleus. It is found in the cytoplasm. The catalysed reaction is Couples ATP hydrolysis with the unwinding of duplex DNA at the replication fork by translocating in the 5'-3' direction. This creates two antiparallel DNA single strands (ssDNA). The leading ssDNA polymer is the template for DNA polymerase III holoenzyme which synthesizes a continuous strand.. It carries out the reaction ATP + H2O = ADP + phosphate + H(+). Helicase activity on forked substrates is stimulated by replication protein A complex heterotrimer (RPA1, RPA2, RPA3). Helicase activity on G-quadruplex DNA is stimulated 3-fold by RPA, and inhibited by MSH2/MSH6. Unwinding of G-quadruplex DNA is inhibited by ATP-gamma-S and telomestatin (TMS); TMA does not inhibit unwinding of forked-duplex DNA. Helicase activity on dsDNA and G-quadruplex DNA is inhibited by porphyrin derivatives meso-tetra (N-methyl-4-pyridyl) porphine tetra tosylate (T4) and N-methyl mesoporphyrin IX (NMM). Its function is as follows. DNA-dependent ATPase and 5'-3' DNA helicase required for the maintenance of chromosomal stability. Acts late in the Fanconi anemia pathway, after FANCD2 ubiquitination. Involved in the repair of DNA double-strand breaks by homologous recombination in a manner that depends on its association with BRCA1. Involved in the repair of abasic sites at replication forks by promoting the degradation of DNA-protein cross-links: acts by catalyzing unfolding of HMCES DNA-protein cross-link via its helicase activity, exposing the underlying DNA and enabling cleavage of the DNA-protein adduct by the SPRTN metalloprotease. Can unwind RNA:DNA substrates. Unwinds G-quadruplex DNA; unwinding requires a 5'-single stranded tail. The protein is Fanconi anemia group J protein of Homo sapiens (Human).